A 505-amino-acid chain; its full sequence is 4-alpha-glucanotransferase (505 aa).

It belongs to the disproportionating enzyme family.

It localises to the cytoplasm. The enzyme catalyses Transfers a segment of a (1-&gt;4)-alpha-D-glucan to a new position in an acceptor, which may be glucose or a (1-&gt;4)-alpha-D-glucan.. The polypeptide is 4-alpha-glucanotransferase (malQ) (Streptococcus pneumoniae serotype 4 (strain ATCC BAA-334 / TIGR4)).